Consider the following 488-residue polypeptide: Rhamnulokinase (488 aa).

Residue 11 to 15 (ASSGR) coordinates ATP. Substrate contacts are provided by residues Ala79 and 234–236 (HDT). Asp235 functions as the Proton acceptor in the catalytic mechanism. Thr257 lines the ATP pocket. Residue Asn294 participates in substrate binding. ATP contacts are provided by Gln302 and Gly401.

Belongs to the rhamnulokinase family. Mg(2+) serves as cofactor.

The catalysed reaction is L-rhamnulose + ATP = L-rhamnulose 1-phosphate + ADP + H(+). The protein operates within carbohydrate degradation; L-rhamnose degradation; glycerone phosphate from L-rhamnose: step 2/3. Functionally, involved in the catabolism of L-rhamnose (6-deoxy-L-mannose). Catalyzes the transfer of the gamma-phosphate group from ATP to the 1-hydroxyl group of L-rhamnulose to yield L-rhamnulose 1-phosphate. This Lactiplantibacillus plantarum (strain ATCC BAA-793 / NCIMB 8826 / WCFS1) (Lactobacillus plantarum) protein is Rhamnulokinase.